The sequence spans 352 residues: tRNA pseudouridine synthase D (352 aa).

Residue Asp81 is the Nucleophile of the active site. Positions 157-303 (GVPNYFGTQR…MDHERRILRL (147 aa)) constitute a TRUD domain.

It belongs to the pseudouridine synthase TruD family.

The enzyme catalyses uridine(13) in tRNA = pseudouridine(13) in tRNA. Its function is as follows. Responsible for synthesis of pseudouridine from uracil-13 in transfer RNAs. In Pseudomonas putida (strain ATCC 700007 / DSM 6899 / JCM 31910 / BCRC 17059 / LMG 24140 / F1), this protein is tRNA pseudouridine synthase D.